A 440-amino-acid chain; its full sequence is Histidinol dehydrogenase (440 aa).

Residues tyrosine 134, glutamine 196, and asparagine 219 each coordinate NAD(+). 3 residues coordinate substrate: serine 242, glutamine 264, and histidine 267. Residues glutamine 264 and histidine 267 each contribute to the Zn(2+) site. Active-site proton acceptor residues include glutamate 332 and histidine 333. Residues histidine 333, aspartate 366, glutamate 420, and histidine 425 each contribute to the substrate site. Zn(2+) is bound at residue aspartate 366. A Zn(2+)-binding site is contributed by histidine 425.

This sequence belongs to the histidinol dehydrogenase family. The cofactor is Zn(2+).

The enzyme catalyses L-histidinol + 2 NAD(+) + H2O = L-histidine + 2 NADH + 3 H(+). Its pathway is amino-acid biosynthesis; L-histidine biosynthesis; L-histidine from 5-phospho-alpha-D-ribose 1-diphosphate: step 9/9. Functionally, catalyzes the sequential NAD-dependent oxidations of L-histidinol to L-histidinaldehyde and then to L-histidine. The protein is Histidinol dehydrogenase of Prochlorococcus marinus (strain SARG / CCMP1375 / SS120).